Reading from the N-terminus, the 300-residue chain is Acetylglutamate kinase (300 aa).

Substrate contacts are provided by residues 73–74, R95, and N197; that span reads GG.

Belongs to the acetylglutamate kinase family. ArgB subfamily.

Its subcellular location is the cytoplasm. The catalysed reaction is N-acetyl-L-glutamate + ATP = N-acetyl-L-glutamyl 5-phosphate + ADP. It functions in the pathway amino-acid biosynthesis; L-arginine biosynthesis; N(2)-acetyl-L-ornithine from L-glutamate: step 2/4. In terms of biological role, catalyzes the ATP-dependent phosphorylation of N-acetyl-L-glutamate. In Polynucleobacter necessarius subsp. necessarius (strain STIR1), this protein is Acetylglutamate kinase.